A 427-amino-acid polypeptide reads, in one-letter code: 3-phosphoshikimate 1-carboxyvinyltransferase (427 aa).

Lys-20 serves as a coordination point for phosphoenolpyruvate. Ser-21 and Arg-25 together coordinate 3-phosphoshikimate. 2 residues coordinate phosphoenolpyruvate: Gly-92 and Arg-120. Residues Ser-166, Ala-167, Gln-168, Asp-312, and Lys-339 each contribute to the 3-phosphoshikimate site. Position 168 (Gln-168) interacts with phosphoenolpyruvate. Catalysis depends on Asp-312, which acts as the Proton acceptor. Arg-343 and Arg-385 together coordinate phosphoenolpyruvate.

As to quaternary structure, homotetramer.

It is found in the cytoplasm. It catalyses the reaction 3-phosphoshikimate + phosphoenolpyruvate = 5-O-(1-carboxyvinyl)-3-phosphoshikimate + phosphate. The protein operates within metabolic intermediate biosynthesis; chorismate biosynthesis; chorismate from D-erythrose 4-phosphate and phosphoenolpyruvate: step 6/7. With respect to regulation, competitively inhibited by glyphosate. Activated by ammonium, rubidium or potassium ions. Catalyzes the transfer of the enolpyruvyl moiety of phosphoenolpyruvate (PEP) to the 5-hydroxyl of shikimate-3-phosphate (S3P) to produce enolpyruvyl shikimate-3-phosphate and inorganic phosphate. The protein is 3-phosphoshikimate 1-carboxyvinyltransferase of Streptococcus pneumoniae serotype 4 (strain ATCC BAA-334 / TIGR4).